A 673-amino-acid polypeptide reads, in one-letter code: DNA ligase (673 aa).

NAD(+)-binding positions include 33–37 (DHQYD), 83–84 (SL), and E117. K119 acts as the N6-AMP-lysine intermediate in catalysis. Residues R140, E175, K282, and K306 each contribute to the NAD(+) site. Zn(2+) contacts are provided by C400, C403, C418, and C424. The BRCT domain maps to 592-673 (RGSSAISGKT…WVKMVEDARS (82 aa)).

Belongs to the NAD-dependent DNA ligase family. LigA subfamily. Requires Mg(2+) as cofactor. Mn(2+) serves as cofactor.

It carries out the reaction NAD(+) + (deoxyribonucleotide)n-3'-hydroxyl + 5'-phospho-(deoxyribonucleotide)m = (deoxyribonucleotide)n+m + AMP + beta-nicotinamide D-nucleotide.. Functionally, DNA ligase that catalyzes the formation of phosphodiester linkages between 5'-phosphoryl and 3'-hydroxyl groups in double-stranded DNA using NAD as a coenzyme and as the energy source for the reaction. It is essential for DNA replication and repair of damaged DNA. In Anaplasma marginale (strain Florida), this protein is DNA ligase.